The primary structure comprises 36 residues: AAAISCVGSPECPPKCRAQGCKNGKCMNRKCECYYC.

4 cysteine pairs are disulfide-bonded: Cys6/Cys26, Cys12/Cys31, Cys16/Cys33, and Cys21/Cys36. Cys36 bears the Cysteine amide mark.

Belongs to the short scorpion toxin superfamily. Potassium channel inhibitor family. Alpha-KTx 23 subfamily. In terms of tissue distribution, expressed by the venom gland.

The protein localises to the secreted. In terms of biological role, voltage-gated potassium channel inhibitor. Selectively and irreversibly binds (K(d)=2.9 pM) and blocks hKv1.3/KCNA3 potassium channels of human T-lymphocytes. Weakly blocks hKCa3.1/KCNN4, mKv1.1/KCNA1, and hKv1.2/KCNA2 channels. In vivo, high doses (200 ug) produce no symptoms of intoxication when injected into mice. In Vaejovis mexicanus smithi (Mexican scorpion), this protein is Potassium channel toxin alpha-KTx 23.1.